A 320-amino-acid chain; its full sequence is o-succinylbenzoate synthase (320 aa).

Residue Lys133 is the Proton donor of the active site. Mg(2+)-binding residues include Asp161, Glu190, and Asp213. The active-site Proton acceptor is the Lys235.

Belongs to the mandelate racemase/muconate lactonizing enzyme family. MenC type 1 subfamily. A divalent metal cation is required as a cofactor.

It catalyses the reaction (1R,6R)-6-hydroxy-2-succinyl-cyclohexa-2,4-diene-1-carboxylate = 2-succinylbenzoate + H2O. Its pathway is quinol/quinone metabolism; 1,4-dihydroxy-2-naphthoate biosynthesis; 1,4-dihydroxy-2-naphthoate from chorismate: step 4/7. It participates in quinol/quinone metabolism; menaquinone biosynthesis. Functionally, converts 2-succinyl-6-hydroxy-2,4-cyclohexadiene-1-carboxylate (SHCHC) to 2-succinylbenzoate (OSB). This is o-succinylbenzoate synthase from Salmonella newport (strain SL254).